The sequence spans 675 residues: MTTSYMNGHVTEESDSGIKNLGLASPEEHPKHREMAVDCPGDLGTRLMPVRRSAQLERIRQQQEDMRRRREEEGKKQELDLNSSMRLKKLAQIPPKTGIDNPIFDTEEGIVLESPHYAVKILEVEDLFSSLKHIQHTLVDSQSQEDISLLLQLVQNRDFQNAFKIHNAVTVHMNKASPPFPLIANVQDLVQEVQTVLKPVHQKEGQELTALLNAPHIQALLLAHDKVAEQEMQLEPITDERVYESIGHYGGETVKIVRIEKARDIPLGATVRNEMDSVIISRIVKGGAAEKSGLLHEGDEVLEINGIEIRGKDVNEVFDLLSDMHGTLTFVLIPSQQIKPPPAKETVIHVKAHFDYDPSDDPYVPCRELGLSFQKGDILHVISQEDPNWWQAYREGDEDNQPLAGLVPGKSFQQQREAMKQTIEEDKEPEKSGKLWCAKKNKKKRKKVLYNANKNDDYDNEEILTYEEMSLYHQPANRKRPIILIGPQNCGQNELRQRLMNKEKDRFASAVPHTTRNRRDHEVAGRDYHFVSRQAFEADIAAGKFIEHGEFEKNLYGTSIDSVRQVINSGKICLLSLRAQSLKTLRNSDLKPYIIFIAPPSQERLRALLAKEGKNPKPEELREIIEKTREMEQNNGHYFDTAIVNSDLDKAYQELLRLINKLDTEPQWVPSTWLR.

2 disordered regions span residues 1 to 32 (MTTS…HPKH) and 52 to 79 (RSAQ…KQEL). Positions 1–345 (MTTSYMNGHV…QQIKPPPAKE (345 aa)) are required for the correct localization of PALS1 and PATJ at cell-cell contacts and the normal formation of tight junctions and adherens junctions. Residues S14 and S25 each carry the phosphoserine modification. The interval 21 to 140 (LGLASPEEHP…LKHIQHTLVD (120 aa)) is interaction with PARD6B. A compositionally biased stretch (basic and acidic residues) spans 54-79 (AQLERIRQQQEDMRRRREEEGKKQEL). Phosphoserine is present on residues S83 and S84. 2 L27 domains span residues 120–177 (KILE…NKAS) and 179–235 (PFPL…MQLE). The segment at 181–243 (PLIANVQDLV…LEPITDERVY (63 aa)) is interaction with LIN7C. The 81-residue stretch at 256–336 (IVRIEKARDI…TLTFVLIPSQ (81 aa)) folds into the PDZ domain. Residues 345-417 (ETVIHVKAHF…PGKSFQQQRE (73 aa)) form the SH3 domain. In terms of domain architecture, Guanylate kinase-like spans 479 to 660 (KRPIILIGPQ…AYQELLRLIN (182 aa)). 486 to 493 (GPQNCGQN) contributes to the ATP binding site.

It belongs to the MAGUK family. Heterodimer with MPP1. Forms a heterotrimeric complex composed of PALS1, LIN7B and PATJ; the N-terminal L27 domain of PALS1 interacts with the L27 domain of PATJ and the C-terminal L27 domain of PALS1 interacts with the L27 domain of LIN7B. Component of a complex composed of PALS1, CRB1 and MPP4. Component of a complex whose core is composed of ARHGAP17, AMOT, PALS1, PATJ and PARD3/PAR3. Component of a complex composed of PALS1, CRB1 and EPB41L5. Within the complex, interacts (via HOOK domain) with EPB41L5 (via FERM domain), and interacts with CRB1 (via intracellular domain). Component of a complex composed of PALS1, MPP3 and CRB1; PALS1 acts as a bridging protein between MPP3 (via guanylate kinase-like domain) and CRB1. Component of a complex composed of CRB3, PALS1 and PATJ. As part of the Crumbs complex; interacts with WWP1, the interaction is enhanced by AMOTL2 and facilitates WWP1 localization to the plasma membrane. The Crumbs complex promotes monoubiquitination of AMOTL2 by WWP1, which activates the Hippo signaling pathway. Interacts (via PDZ domain) with PATJ (via N-terminus). Interacts with EZR. Interacts (via PDZ domain) with CRB1 (via C-terminal ERLI motif). While the PDZ domain is sufficient for interaction with CRB1, the adjacent SH3 and guanylate kinase-like domains are likely to contribute to a high affinity interaction. Interacts with WWTR1/TAZ (via WW domain). Interacts with MPP7. Interacts (via PDZ domain) with CRB3 (via C-terminus). Interacts with LIN7C. Interacts with MPDZ. Interacts with PARD6B. Interacts with SC6A1. Interacts with CDH5; the interaction promotes PALS1 localization to cell junctions and is required for CDH5-mediated vascular lumen formation and endothelial cell. Interacts with NPHP1 (via coiled coil and SH3 domains). Interacts with NPHP4. Interacts with CRB2.

The protein localises to the golgi apparatus. The protein resides in the cell membrane. It localises to the endomembrane system. Its subcellular location is the cell junction. It is found in the tight junction. The protein localises to the adherens junction. The protein resides in the cell projection. It localises to the axon. Its subcellular location is the perikaryon. It is found in the apical cell membrane. Functionally, plays a role in tight junction biogenesis and in the establishment of cell polarity in epithelial cells. Also involved in adherens junction biogenesis by ensuring correct localization of the exocyst complex protein EXOC4/SEC8 which allows trafficking of adherens junction structural component CDH1 to the cell surface. Plays a role through its interaction with CDH5 in vascular lumen formation and endothelial membrane polarity. Required during embryonic and postnatal retinal development. Required for the maintenance of cerebellar progenitor cells in an undifferentiated proliferative state, preventing premature differentiation, and is required for cerebellar histogenesis, fissure formation, cerebellar layer organization and cortical development. Plays a role in neuronal progenitor cell survival, potentially via promotion of mTOR signaling. Plays a role in the radial and longitudinal extension of the myelin sheath in Schwann cells. May modulate SC6A1/GAT1-mediated GABA uptake by stabilizing the transporter. May play a role in the T-cell receptor-mediated activation of NF-kappa-B. Required for localization of EZR to the apical membrane of parietal cells and may play a role in the dynamic remodeling of the apical cytoskeleton. Required for the normal polarized localization of the vesicular marker STX4. Required for the correct trafficking of the myelin proteins PMP22 and MAG. Involved in promoting phosphorylation and cytoplasmic retention of transcriptional coactivators YAP1 and WWTR1/TAZ which leads to suppression of TGFB1-dependent transcription of target genes such as CCN2/CTGF, SERPINE1/PAI1, SNAI1/SNAIL1 and SMAD7. The chain is Protein PALS1 from Rattus norvegicus (Rat).